A 206-amino-acid polypeptide reads, in one-letter code: FMN-dependent NADH:quinone oxidoreductase 2 (206 aa).

Serine 10 is an FMN binding site.

The protein belongs to the azoreductase type 1 family. In terms of assembly, homodimer. FMN is required as a cofactor.

It catalyses the reaction 2 a quinone + NADH + H(+) = 2 a 1,4-benzosemiquinone + NAD(+). The enzyme catalyses N,N-dimethyl-1,4-phenylenediamine + anthranilate + 2 NAD(+) = 2-(4-dimethylaminophenyl)diazenylbenzoate + 2 NADH + 2 H(+). In terms of biological role, quinone reductase that provides resistance to thiol-specific stress caused by electrophilic quinones. Its function is as follows. Also exhibits azoreductase activity. Catalyzes the reductive cleavage of the azo bond in aromatic azo compounds to the corresponding amines. This Rhizobium etli (strain ATCC 51251 / DSM 11541 / JCM 21823 / NBRC 15573 / CFN 42) protein is FMN-dependent NADH:quinone oxidoreductase 2.